The sequence spans 598 residues: Aspartate--tRNA ligase (598 aa).

Residue glutamate 182 coordinates L-aspartate. Residues glutamine 206 to lysine 209 are aspartate. Arginine 228 contacts L-aspartate. ATP contacts are provided by residues arginine 228–glutamate 230 and glutamine 237. Histidine 456 lines the L-aspartate pocket. Glutamate 490 serves as a coordination point for ATP. Arginine 497 is a binding site for L-aspartate. Glycine 542–arginine 545 contributes to the ATP binding site.

The protein belongs to the class-II aminoacyl-tRNA synthetase family. Type 1 subfamily. Homodimer.

It localises to the cytoplasm. The enzyme catalyses tRNA(Asp) + L-aspartate + ATP = L-aspartyl-tRNA(Asp) + AMP + diphosphate. Catalyzes the attachment of L-aspartate to tRNA(Asp) in a two-step reaction: L-aspartate is first activated by ATP to form Asp-AMP and then transferred to the acceptor end of tRNA(Asp). The protein is Aspartate--tRNA ligase of Agathobacter rectalis (strain ATCC 33656 / DSM 3377 / JCM 17463 / KCTC 5835 / VPI 0990) (Eubacterium rectale).